The primary structure comprises 100 residues: Large ribosomal subunit protein bL28 (100 aa).

Residues 1–25 (MTRRCDITGKSVLSGNNVSHANNKS) form a disordered region. The segment covering 11–22 (SVLSGNNVSHAN) has biased composition (polar residues).

Belongs to the bacterial ribosomal protein bL28 family.

The protein is Large ribosomal subunit protein bL28 of Acidiphilium cryptum (strain JF-5).